Here is a 314-residue protein sequence, read N- to C-terminus: Aspartate carbamoyltransferase catalytic subunit (314 aa).

Residues arginine 58 and threonine 59 each contribute to the carbamoyl phosphate site. Lysine 86 is an L-aspartate binding site. Arginine 108, histidine 136, and glutamine 139 together coordinate carbamoyl phosphate. L-aspartate contacts are provided by arginine 169 and arginine 223. Carbamoyl phosphate-binding residues include glycine 264 and proline 265.

The protein belongs to the aspartate/ornithine carbamoyltransferase superfamily. ATCase family. In terms of assembly, heterododecamer (2C3:3R2) of six catalytic PyrB chains organized as two trimers (C3), and six regulatory PyrI chains organized as three dimers (R2).

It catalyses the reaction carbamoyl phosphate + L-aspartate = N-carbamoyl-L-aspartate + phosphate + H(+). The protein operates within pyrimidine metabolism; UMP biosynthesis via de novo pathway; (S)-dihydroorotate from bicarbonate: step 2/3. In terms of biological role, catalyzes the condensation of carbamoyl phosphate and aspartate to form carbamoyl aspartate and inorganic phosphate, the committed step in the de novo pyrimidine nucleotide biosynthesis pathway. This Jannaschia sp. (strain CCS1) protein is Aspartate carbamoyltransferase catalytic subunit.